A 95-amino-acid chain; its full sequence is uncharacterized protein (95 aa).

The tract at residues 46–68 is disordered; that stretch reads GDRGTNGRTEAEHDGIPHSRKKV.

This is an uncharacterized protein from Schizosaccharomyces pombe (strain 972 / ATCC 24843) (Fission yeast).